Reading from the N-terminus, the 165-residue chain is Cyclic pyranopterin monophosphate synthase (165 aa).

Residues 79-81 and 117-118 contribute to the substrate site; these read LCH and ME. Asp132 is an active-site residue.

Belongs to the MoaC family. Homohexamer; trimer of dimers.

It carries out the reaction (8S)-3',8-cyclo-7,8-dihydroguanosine 5'-triphosphate = cyclic pyranopterin phosphate + diphosphate. It functions in the pathway cofactor biosynthesis; molybdopterin biosynthesis. Its function is as follows. Catalyzes the conversion of (8S)-3',8-cyclo-7,8-dihydroguanosine 5'-triphosphate to cyclic pyranopterin monophosphate (cPMP). The chain is Cyclic pyranopterin monophosphate synthase from Chloroflexus aggregans (strain MD-66 / DSM 9485).